Here is a 372-residue protein sequence, read N- to C-terminus: Protein phosphatase 1 regulatory subunit 42 (372 aa).

LRR repeat units follow at residues Arg30–Arg51, Asn52–Ser71, Asn72–Lys93, Arg94–Arg115, Glu116–Pro137, Ser146–Glu167, and Asn168–Leu189. Positions Asn203 to Trp241 constitute an LRRCT domain.

The protein localises to the cytoplasm. It is found in the cytoskeleton. The protein resides in the microtubule organizing center. Its subcellular location is the centrosome. May regulate phosphatase activity of protein phosphatase 1 (PP1) complexes. The sequence is that of Protein phosphatase 1 regulatory subunit 42 (ppp1r42) from Xenopus laevis (African clawed frog).